The following is a 228-amino-acid chain: Ribosomal RNA large subunit methyltransferase E (228 aa).

5 residues coordinate S-adenosyl-L-methionine: Gly76, Trp78, Asp99, Asp115, and Asp139. The Proton acceptor role is filled by Lys179.

Belongs to the class I-like SAM-binding methyltransferase superfamily. RNA methyltransferase RlmE family.

It is found in the cytoplasm. It carries out the reaction uridine(2552) in 23S rRNA + S-adenosyl-L-methionine = 2'-O-methyluridine(2552) in 23S rRNA + S-adenosyl-L-homocysteine + H(+). Functionally, specifically methylates the uridine in position 2552 of 23S rRNA at the 2'-O position of the ribose in the fully assembled 50S ribosomal subunit. The polypeptide is Ribosomal RNA large subunit methyltransferase E (Nitrobacter hamburgensis (strain DSM 10229 / NCIMB 13809 / X14)).